A 222-amino-acid chain; its full sequence is Probable GTP-binding protein EngB (222 aa).

In terms of domain architecture, EngB-type G spans 27–202 (TGIEVAFAGR…AKKLDEWFLG (176 aa)). GTP is bound by residues 35 to 42 (GRSNAGKS), 61 to 65 (GRTQL), 81 to 84 (DLPG), 148 to 151 (TKAD), and 181 to 183 (FSS). The Mg(2+) site is built by Ser-42 and Thr-63.

This sequence belongs to the TRAFAC class TrmE-Era-EngA-EngB-Septin-like GTPase superfamily. EngB GTPase family. It depends on Mg(2+) as a cofactor.

Necessary for normal cell division and for the maintenance of normal septation. The sequence is that of Probable GTP-binding protein EngB from Pseudoalteromonas translucida (strain TAC 125).